We begin with the raw amino-acid sequence, 226 residues long: Cytidylate kinase (226 aa).

Gly-12 to Thr-20 provides a ligand contact to ATP.

It belongs to the cytidylate kinase family. Type 1 subfamily.

It localises to the cytoplasm. It catalyses the reaction CMP + ATP = CDP + ADP. It carries out the reaction dCMP + ATP = dCDP + ADP. This chain is Cytidylate kinase, found in Vibrio parahaemolyticus serotype O3:K6 (strain RIMD 2210633).